A 334-amino-acid polypeptide reads, in one-letter code: Glycerol-1-phosphate dehydrogenase [NAD(P)+] (334 aa).

NAD(+)-binding positions include 77–81 (GRPID) and 99–102 (TTAS). Asp104 is a substrate binding site. Ser108 is a binding site for NAD(+). Residue Asp147 participates in substrate binding. Residues Asp147 and His225 each contribute to the Zn(2+) site. A substrate-binding site is contributed by His229. A Zn(2+)-binding site is contributed by His246.

It belongs to the glycerol-1-phosphate dehydrogenase family. Zn(2+) serves as cofactor.

It is found in the cytoplasm. The catalysed reaction is sn-glycerol 1-phosphate + NAD(+) = dihydroxyacetone phosphate + NADH + H(+). It carries out the reaction sn-glycerol 1-phosphate + NADP(+) = dihydroxyacetone phosphate + NADPH + H(+). Its pathway is membrane lipid metabolism; glycerophospholipid metabolism. In terms of biological role, catalyzes the NAD(P)H-dependent reduction of dihydroxyacetonephosphate (DHAP or glycerone phosphate) to glycerol 1-phosphate (G1P). The G1P thus generated is used as the glycerophosphate backbone of phospholipids in the cellular membranes of Archaea. The sequence is that of Glycerol-1-phosphate dehydrogenase [NAD(P)+] from Methanococcus maripaludis (strain C7 / ATCC BAA-1331).